A 157-amino-acid polypeptide reads, in one-letter code: Endoribonuclease YbeY (157 aa).

Residues histidine 114, histidine 118, and histidine 124 each coordinate Zn(2+).

The protein belongs to the endoribonuclease YbeY family. Zn(2+) serves as cofactor.

Its subcellular location is the cytoplasm. Its function is as follows. Single strand-specific metallo-endoribonuclease involved in late-stage 70S ribosome quality control and in maturation of the 3' terminus of the 16S rRNA. This Salmonella dublin (strain CT_02021853) protein is Endoribonuclease YbeY.